The following is a 616-amino-acid chain: Dihydroxy-acid dehydratase (616 aa).

Asp81 contributes to the Mg(2+) binding site. Residue Cys122 participates in [2Fe-2S] cluster binding. Residues Asp123 and Lys124 each coordinate Mg(2+). Residue Lys124 is modified to N6-carboxylysine. Residue Cys195 coordinates [2Fe-2S] cluster. Residue Glu491 participates in Mg(2+) binding. The Proton acceptor role is filled by Ser517.

Belongs to the IlvD/Edd family. In terms of assembly, homodimer. [2Fe-2S] cluster serves as cofactor. Requires Mg(2+) as cofactor.

The enzyme catalyses (2R)-2,3-dihydroxy-3-methylbutanoate = 3-methyl-2-oxobutanoate + H2O. It carries out the reaction (2R,3R)-2,3-dihydroxy-3-methylpentanoate = (S)-3-methyl-2-oxopentanoate + H2O. It participates in amino-acid biosynthesis; L-isoleucine biosynthesis; L-isoleucine from 2-oxobutanoate: step 3/4. Its pathway is amino-acid biosynthesis; L-valine biosynthesis; L-valine from pyruvate: step 3/4. Functionally, functions in the biosynthesis of branched-chain amino acids. Catalyzes the dehydration of (2R,3R)-2,3-dihydroxy-3-methylpentanoate (2,3-dihydroxy-3-methylvalerate) into 2-oxo-3-methylpentanoate (2-oxo-3-methylvalerate) and of (2R)-2,3-dihydroxy-3-methylbutanoate (2,3-dihydroxyisovalerate) into 2-oxo-3-methylbutanoate (2-oxoisovalerate), the penultimate precursor to L-isoleucine and L-valine, respectively. The sequence is that of Dihydroxy-acid dehydratase from Pectobacterium carotovorum subsp. carotovorum (strain PC1).